A 92-amino-acid chain; its full sequence is DNA-directed RNA polymerase subunit Rpo5 (92 aa).

This sequence belongs to the archaeal Rpo5/eukaryotic RPB5 RNA polymerase subunit family. Part of the RNA polymerase complex.

The protein resides in the cytoplasm. It catalyses the reaction RNA(n) + a ribonucleoside 5'-triphosphate = RNA(n+1) + diphosphate. DNA-dependent RNA polymerase (RNAP) catalyzes the transcription of DNA into RNA using the four ribonucleoside triphosphates as substrates. In Methanopyrus kandleri (strain AV19 / DSM 6324 / JCM 9639 / NBRC 100938), this protein is DNA-directed RNA polymerase subunit Rpo5.